Here is a 141-residue protein sequence, read N- to C-terminus: Hemoglobin subunit alpha (141 aa).

The Globin domain occupies 1–141 (VLSPADKTNV…VSTVLTSKYR (141 aa)). Phosphoserine is present on S3. K7 carries the post-translational modification N6-succinyllysine. T8 carries the phosphothreonine modification. Residue K11 is modified to N6-succinyllysine. Residue K16 is modified to N6-acetyllysine; alternate. Residue K16 is modified to N6-succinyllysine; alternate. Position 24 is a phosphotyrosine (Y24). S35 bears the Phosphoserine mark. N6-succinyllysine is present on K40. S49 carries the phosphoserine modification. H58 serves as a coordination point for O2. H87 serves as a coordination point for heme b. S102 carries the phosphoserine modification. Residue T108 is modified to Phosphothreonine. Phosphoserine occurs at positions 124 and 131. Phosphothreonine is present on residues T134 and T137. S138 bears the Phosphoserine mark.

The protein belongs to the globin family. Heterotetramer of two alpha chains and two beta chains. Red blood cells.

In terms of biological role, involved in oxygen transport from the lung to the various peripheral tissues. Its function is as follows. Hemopressin acts as an antagonist peptide of the cannabinoid receptor CNR1. Hemopressin-binding efficiently blocks cannabinoid receptor CNR1 and subsequent signaling. The sequence is that of Hemoglobin subunit alpha (HBA) from Gorilla gorilla gorilla (Western lowland gorilla).